Here is a 483-residue protein sequence, read N- to C-terminus: Probable apyrase 3 (483 aa).

Residues 1–29 (MTPETDALKVQILPKHQSLPYTVTKAKSK) are Cytoplasmic-facing. The chain crosses the membrane as a helical; Signal-anchor for type II membrane protein span at residues 30–50 (SLILLVVVSVTITLGLLLYVF). At 51 to 483 (NSNSVISSGS…NGKSRKYLGF (433 aa)) the chain is on the extracellular side. Residue 72-82 (VLIDAGSSGTR) participates in ATP binding. E195 functions as the Proton acceptor in the catalytic mechanism. 219 to 229 (GIVELGGASAQ) contacts ATP. N250, N281, N305, and N326 each carry an N-linked (GlcNAc...) asparagine glycan.

It belongs to the GDA1/CD39 NTPase family. Ca(2+) serves as cofactor. Expressed in the initiation zone of lateral root and in the lateral root tip, the adaxial junction of lateral shoots with the stems, and in the abscission zone of flower organs. Not expressed in the rosette leaves.

The protein resides in the membrane. It carries out the reaction a ribonucleoside 5'-triphosphate + 2 H2O = a ribonucleoside 5'-phosphate + 2 phosphate + 2 H(+). In terms of biological role, catalyzes the hydrolysis of phosphoanhydride bonds of nucleoside tri- and di-phosphates. The protein is Probable apyrase 3 (APY3) of Arabidopsis thaliana (Mouse-ear cress).